A 61-amino-acid chain; its full sequence is UPF0434 protein PFL_1779 (61 aa).

Belongs to the UPF0434 family.

This Pseudomonas fluorescens (strain ATCC BAA-477 / NRRL B-23932 / Pf-5) protein is UPF0434 protein PFL_1779.